The chain runs to 366 residues: Tetraacyldisaccharide 4'-kinase (366 aa).

51 to 58 contributes to the ATP binding site; sequence TVGGTGKT.

It belongs to the LpxK family.

It carries out the reaction a lipid A disaccharide + ATP = a lipid IVA + ADP + H(+). The protein operates within glycolipid biosynthesis; lipid IV(A) biosynthesis; lipid IV(A) from (3R)-3-hydroxytetradecanoyl-[acyl-carrier-protein] and UDP-N-acetyl-alpha-D-glucosamine: step 6/6. Functionally, transfers the gamma-phosphate of ATP to the 4'-position of a tetraacyldisaccharide 1-phosphate intermediate (termed DS-1-P) to form tetraacyldisaccharide 1,4'-bis-phosphate (lipid IVA). The polypeptide is Tetraacyldisaccharide 4'-kinase (Phocaeicola vulgatus (strain ATCC 8482 / DSM 1447 / JCM 5826 / CCUG 4940 / NBRC 14291 / NCTC 11154) (Bacteroides vulgatus)).